A 261-amino-acid chain; its full sequence is Zinc import ATP-binding protein ZnuC (261 aa).

Residues 5–220 (ISLKALSVTF…PSYIALFGSA (216 aa)) enclose the ABC transporter domain. Residue 37-44 (GPNGAGKS) participates in ATP binding. The tract at residues 236-261 (HHDLAGQPVSGDATQCNHHHHGHHHD) is disordered. Basic residues predominate over residues 252–261 (NHHHHGHHHD).

Belongs to the ABC transporter superfamily. Zinc importer (TC 3.A.1.15.5) family. The complex is composed of two ATP-binding proteins (ZnuC), two transmembrane proteins (ZnuB) and a solute-binding protein (ZnuA).

Its subcellular location is the cell inner membrane. It carries out the reaction Zn(2+)(out) + ATP(in) + H2O(in) = Zn(2+)(in) + ADP(in) + phosphate(in) + H(+)(in). Part of the ABC transporter complex ZnuABC involved in zinc import. Responsible for energy coupling to the transport system. This Vibrio vulnificus (strain CMCP6) protein is Zinc import ATP-binding protein ZnuC.